A 440-amino-acid polypeptide reads, in one-letter code: Trigger factor (440 aa).

One can recognise a PPIase FKBP-type domain in the interval 163–248; it reads GDTVVIDFKG…VHEVKTKELP (86 aa).

The protein belongs to the FKBP-type PPIase family. Tig subfamily.

The protein localises to the cytoplasm. It catalyses the reaction [protein]-peptidylproline (omega=180) = [protein]-peptidylproline (omega=0). Involved in protein export. Acts as a chaperone by maintaining the newly synthesized protein in an open conformation. Functions as a peptidyl-prolyl cis-trans isomerase. The chain is Trigger factor from Lactiplantibacillus plantarum (strain ATCC BAA-793 / NCIMB 8826 / WCFS1) (Lactobacillus plantarum).